Consider the following 1088-residue polypeptide: RNA-directed RNA polymerase (1088 aa).

The RdRp catalytic domain maps to 501-687; sequence LSYGDVTRFL…AKRYIAGGKI (187 aa).

The protein belongs to the reoviridae RNA-directed RNA polymerase family. As to quaternary structure, interacts with VP3 (Potential). Interacts with VP2; this interaction activates VP1. Interacts with NSP5; this interaction is probably necessary for the formation of functional virus factories. Interacts with NSP2; this interaction is weak. Mg(2+) serves as cofactor.

The protein localises to the virion. The catalysed reaction is RNA(n) + a ribonucleoside 5'-triphosphate = RNA(n+1) + diphosphate. RNA-directed RNA polymerase that is involved in both transcription and genome replication. Together with VP3 capping enzyme, forms an enzyme complex positioned near the channels situated at each of the five-fold vertices of the core. Following infection, the outermost layer of the virus is lost, leaving a double-layered particle (DLP) made up of the core and VP6 shell. VP1 then catalyzes the transcription of fully conservative plus-strand genomic RNAs that are extruded through the DLP's channels into the cytoplasm where they function as mRNAs for translation of viral proteins. One copy of each of the viral (+)RNAs is also recruited during core assembly, together with newly synthesized polymerase complexes and VP2. The polymerase of these novo-formed particles catalyzes the synthesis of complementary minus-strands leading to dsRNA formation. To do so, the polymerase specifically recognizes and binds 4 bases 5'-UGUG-3' in the conserved 3'-sequence of plus-strand RNA templates. VP2 presumably activates the autoinhibited VP1-RNA complex to coordinate packaging and genome replication. Once dsRNA synthesis is complete, the polymerase switches to the transcriptional mode, thus providing secondary transcription. This Sus scrofa (Pig) protein is RNA-directed RNA polymerase.